Consider the following 157-residue polypeptide: 2-C-methyl-D-erythritol 2,4-cyclodiphosphate synthase (157 aa).

Residues Asp8 and His10 each coordinate a divalent metal cation. Residues 8–10 (DVH) and 34–35 (HS) each bind 4-CDP-2-C-methyl-D-erythritol 2-phosphate. Residue His42 coordinates a divalent metal cation. Residues 56 to 58 (DIG), 61 to 65 (FPDTD), 100 to 106 (AQAPKMA), 132 to 135 (TTTE), Phe139, and Arg142 contribute to the 4-CDP-2-C-methyl-D-erythritol 2-phosphate site.

It belongs to the IspF family. As to quaternary structure, homotrimer. Requires a divalent metal cation as cofactor.

The catalysed reaction is 4-CDP-2-C-methyl-D-erythritol 2-phosphate = 2-C-methyl-D-erythritol 2,4-cyclic diphosphate + CMP. The protein operates within isoprenoid biosynthesis; isopentenyl diphosphate biosynthesis via DXP pathway; isopentenyl diphosphate from 1-deoxy-D-xylulose 5-phosphate: step 4/6. Its function is as follows. Involved in the biosynthesis of isopentenyl diphosphate (IPP) and dimethylallyl diphosphate (DMAPP), two major building blocks of isoprenoid compounds. Catalyzes the conversion of 4-diphosphocytidyl-2-C-methyl-D-erythritol 2-phosphate (CDP-ME2P) to 2-C-methyl-D-erythritol 2,4-cyclodiphosphate (ME-CPP) with a corresponding release of cytidine 5-monophosphate (CMP). In Serratia proteamaculans (strain 568), this protein is 2-C-methyl-D-erythritol 2,4-cyclodiphosphate synthase.